Consider the following 296-residue polypeptide: Formamidopyrimidine-DNA glycosylase (296 aa).

The active-site Schiff-base intermediate with DNA is the Pro2. Glu3 functions as the Proton donor in the catalytic mechanism. Residue Lys58 is the Proton donor; for beta-elimination activity of the active site. DNA-binding residues include His106, Arg125, and Lys168. The FPG-type zinc finger occupies 259–295; it reads RVYDRVGHACPTKGCTGRIGRIVQGGRSTFFCETCQV. Catalysis depends on Arg285, which acts as the Proton donor; for delta-elimination activity.

Belongs to the FPG family. In terms of assembly, monomer. Requires Zn(2+) as cofactor.

It catalyses the reaction Hydrolysis of DNA containing ring-opened 7-methylguanine residues, releasing 2,6-diamino-4-hydroxy-5-(N-methyl)formamidopyrimidine.. The catalysed reaction is 2'-deoxyribonucleotide-(2'-deoxyribose 5'-phosphate)-2'-deoxyribonucleotide-DNA = a 3'-end 2'-deoxyribonucleotide-(2,3-dehydro-2,3-deoxyribose 5'-phosphate)-DNA + a 5'-end 5'-phospho-2'-deoxyribonucleoside-DNA + H(+). Its function is as follows. Involved in base excision repair of DNA damaged by oxidation or by mutagenic agents. Acts as a DNA glycosylase that recognizes and removes damaged bases. Has a preference for oxidized purines, such as 7,8-dihydro-8-oxoguanine (8-oxoG). Has AP (apurinic/apyrimidinic) lyase activity and introduces nicks in the DNA strand. Cleaves the DNA backbone by beta-delta elimination to generate a single-strand break at the site of the removed base with both 3'- and 5'-phosphates. This is Formamidopyrimidine-DNA glycosylase from Methylorubrum populi (strain ATCC BAA-705 / NCIMB 13946 / BJ001) (Methylobacterium populi).